The sequence spans 317 residues: MTTALDQLKQYTTVVADTGDFQQLAQYKPQDATTNPSLILKAVQKDAYKPILEKTVRDHRNESTDFIIDRLLIAFGTEILKLIPGRVSTEVDARLSFDTQRSIDKGRELIKLYEAAGVGRERILIKLASTWEGIRAAEVLQKEGIKCNMTLLFSLVQAAACAEAGAQLISPFVGRIYDWYKKQAGAEWNEARDGGANDPGVQSVRRIYTYYKTFGYKTEVMGASFRTTSQITELAGCDLLTISPDLLQKLQESNETVARKLSPETLQDKPAERVAIDEASFRFQLNDEAMATEKLAEGIRVFAADAVKLEKLIDALR.

Catalysis depends on Lys126, which acts as the Schiff-base intermediate with substrate.

Belongs to the transaldolase family. Type 1 subfamily. In terms of assembly, homodimer.

It is found in the cytoplasm. The enzyme catalyses D-sedoheptulose 7-phosphate + D-glyceraldehyde 3-phosphate = D-erythrose 4-phosphate + beta-D-fructose 6-phosphate. Its pathway is carbohydrate degradation; pentose phosphate pathway; D-glyceraldehyde 3-phosphate and beta-D-fructose 6-phosphate from D-ribose 5-phosphate and D-xylulose 5-phosphate (non-oxidative stage): step 2/3. Transaldolase is important for the balance of metabolites in the pentose-phosphate pathway. This is Transaldolase from Burkholderia orbicola (strain MC0-3).